We begin with the raw amino-acid sequence, 181 residues long: Acireductone dioxygenase (181 aa).

Histidine 100, histidine 102, glutamate 106, and histidine 145 together coordinate Fe(2+). Ni(2+)-binding residues include histidine 100, histidine 102, glutamate 106, and histidine 145.

The protein belongs to the acireductone dioxygenase (ARD) family. As to quaternary structure, monomer. The cofactor is Fe(2+). Ni(2+) serves as cofactor.

The enzyme catalyses 1,2-dihydroxy-5-(methylsulfanyl)pent-1-en-3-one + O2 = 3-(methylsulfanyl)propanoate + CO + formate + 2 H(+). The catalysed reaction is 1,2-dihydroxy-5-(methylsulfanyl)pent-1-en-3-one + O2 = 4-methylsulfanyl-2-oxobutanoate + formate + 2 H(+). The protein operates within amino-acid biosynthesis; L-methionine biosynthesis via salvage pathway; L-methionine from S-methyl-5-thio-alpha-D-ribose 1-phosphate: step 5/6. Functionally, catalyzes 2 different reactions between oxygen and the acireductone 1,2-dihydroxy-3-keto-5-methylthiopentene (DHK-MTPene) depending upon the metal bound in the active site. Fe-containing acireductone dioxygenase (Fe-ARD) produces formate and 2-keto-4-methylthiobutyrate (KMTB), the alpha-ketoacid precursor of methionine in the methionine recycle pathway. Ni-containing acireductone dioxygenase (Ni-ARD) produces methylthiopropionate, carbon monoxide and formate, and does not lie on the methionine recycle pathway. In Trichodesmium erythraeum (strain IMS101), this protein is Acireductone dioxygenase.